The primary structure comprises 1612 residues: Roundabout homolog 1 (1612 aa).

The N-terminal stretch at 1–19 is a signal peptide; that stretch reads MIAEPAHFYLFGLICLCSG. The Extracellular segment spans residues 20–858; the sequence is SRLRQEDFPP…QQISDVVRQP (839 aa). Ig-like C2-type domains follow at residues 29-125, 131-218, 223-307, 312-407, and 416-502; these read PRIV…ASLE, DDFR…AELT, PSFV…ATLT, PHFV…LEVT, and PVIR…AYIE. A disulfide bridge links C50 with C108. N121 is a glycosylation site (N-linked (GlcNAc...) asparagine). 3 disulfides stabilise this stretch: C152/C201, C244/C291, and C333/C389. Residue N424 is glycosylated (N-linked (GlcNAc...) asparagine). A disulfide bridge links C437 with C486. Fibronectin type-III domains are found at residues 524 to 618, 637 to 734, and 739 to 835; these read APSK…TQDV, VVLH…TLEE, and PPRS…LDSH. N-linked (GlcNAc...) asparagine glycosylation is found at N751, N781, and N788. Residues 859–879 form a helical membrane-spanning segment; sequence AFIAGIGAACWIILMVFSIWL. Residues 880-1612 are Cytoplasmic-facing; that stretch reads YRHRKKRNGL…NNEELEETES (733 aa). A Phosphoserine modification is found at S901. T909 is subject to Phosphothreonine. Position 999 is a phosphotyrosine (Y999). Position 1016 is a phosphoserine (S1016). At Y1034 the chain carries Phosphotyrosine. Residues 1045-1068 form a disordered region; sequence SNNMNNGAGDSSEKHWKPPGQQKP. At Y1075 the chain carries Phosphotyrosine. Disordered stretches follow at residues 1088 to 1298, 1313 to 1358, and 1381 to 1612; these read RAND…ADME, EQTP…DGSF, and RRQM…ETES. The segment covering 1098 to 1107 has biased composition (polar residues); sequence PYNQSYDQNT. Over residues 1108-1124 the composition is skewed to low complexity; sequence GGSYNSSDRGSSTSGSQ. Over residues 1147 to 1157 the composition is skewed to pro residues; that stretch reads LPPPPAHPPPH. A Phosphothreonine modification is found at T1201. Residues 1216 to 1230 show a composition bias toward polar residues; that stretch reads YSHQSTATLTPSPQE. Residues 1242–1254 show a composition bias toward basic and acidic residues; that stretch reads DLGHMPHPPDRRR. Pro residues predominate over residues 1257–1268; the sequence is VSPPPPPRPISP. S1258 is modified (phosphoserine). The segment covering 1283-1297 has biased composition (acidic residues); the sequence is MDTDAPEEEEDEADM. Low complexity predominate over residues 1345-1358; sequence SSGRSSVSSSDGSF. Over residues 1399-1412 the composition is skewed to polar residues; the sequence is PRPTSPVSTDSNMS. Residues 1420–1431 show a composition bias toward basic residues; sequence RPAKKQKHQPGH. Positions 1441 to 1451 are enriched in pro residues; it reads LPPPPVPPPAI. Composition is skewed to basic and acidic residues over residues 1477-1502 and 1510-1534; these read ARTD…RQVT and DPRE…RDLP. Polar residues predominate over residues 1553–1562; it reads FPTSNNPRDP. The segment covering 1563-1575 has biased composition (low complexity); sequence SSSSSMSSRGSGS. Acidic residues predominate over residues 1603 to 1612; that stretch reads NNEELEETES.

Belongs to the immunoglobulin superfamily. ROBO family. As to quaternary structure, homodimer. Dimerization is mediated by the extracellular domain and is independent of SLIT liganding. Interacts with SLIT1 Interacts with SLIT2. Interacts with FLRT3. Interacts with MYO9B (via Rho-GAP domain). In terms of processing, ubiquitinated. May be deubiquitinated by USP33. In terms of tissue distribution, detected in embryonic thalamus neurons (at protein level). Expressed in embryonal spinal cord. Expressed in embryonal lung, and in adult lung bronchial epithelial cells of large proximal airways.

It is found in the cell membrane. It localises to the cell projection. The protein localises to the axon. Its subcellular location is the endoplasmic reticulum-Golgi intermediate compartment membrane. Functionally, receptor for SLIT1 and SLIT2 that mediates cellular responses to molecular guidance cues in cellular migration, including axonal navigation at the ventral midline of the neural tube and projection of axons to different regions during neuronal development. Interaction with the intracellular domain of FLRT3 mediates axon attraction towards cells expressing NTN1. In axon growth cones, the silencing of the attractive effect of NTN1 by SLIT2 may require the formation of a ROBO1-DCC complex. Plays a role in the regulation of cell migration via its interaction with MYO9B; inhibits MYO9B-mediated stimulation of RHOA GTPase activity, and thereby leads to increased levels of active, GTP-bound RHOA. May be required for lung development. In Mus musculus (Mouse), this protein is Roundabout homolog 1 (Robo1).